The sequence spans 175 residues: SsrA-binding protein (175 aa).

Disordered regions lie at residues 1 to 29 (MTRNPQPDRSKTAPKNAKRDPVASGERDA) and 152 to 175 (KRETDRRKTADRDAREAIARSRKS).

The protein belongs to the SmpB family.

It localises to the cytoplasm. Its function is as follows. Required for rescue of stalled ribosomes mediated by trans-translation. Binds to transfer-messenger RNA (tmRNA), required for stable association of tmRNA with ribosomes. tmRNA and SmpB together mimic tRNA shape, replacing the anticodon stem-loop with SmpB. tmRNA is encoded by the ssrA gene; the 2 termini fold to resemble tRNA(Ala) and it encodes a 'tag peptide', a short internal open reading frame. During trans-translation Ala-aminoacylated tmRNA acts like a tRNA, entering the A-site of stalled ribosomes, displacing the stalled mRNA. The ribosome then switches to translate the ORF on the tmRNA; the nascent peptide is terminated with the 'tag peptide' encoded by the tmRNA and targeted for degradation. The ribosome is freed to recommence translation, which seems to be the essential function of trans-translation. The chain is SsrA-binding protein from Koribacter versatilis (strain Ellin345).